Consider the following 524-residue polypeptide: Serine/threonine-protein phosphatase 2A 56 kDa regulatory subunit gamma isoform (524 aa).

Met1 carries the N-acetylmethionine modification. Positions 472–489 match the Nuclear localization signal motif; it reads RKTVSDEARQAQKDPKKE. Residues 476-524 are disordered; it reads SDEARQAQKDPKKERPLARRKSELPQDPHTKKALEAHCRADELVPQDGR.

Belongs to the phosphatase 2A regulatory subunit B56 family. In terms of assembly, PP2A consists of a common heterodimeric core enzyme, composed of PPP2CA a 36 kDa catalytic subunit (subunit C) and PPP2R1A a 65 kDa constant regulatory subunit (PR65 or subunit A), that associates with a variety of regulatory subunits. Proteins that associate with the core dimer include three families of regulatory subunits B (the R2/B/PR55/B55, R3/B''/PR72/PR130/PR59 and R5/B'/B56 families), the 48 kDa variable regulatory subunit, viral proteins, and cell signaling molecules. Interacts with SGO1. Interacts with SGO1; the interaction is direct. May interact with TP53. Interacts with IER3 and/or ERK kinases; regulates ERK dephosphorylation Interacts with CIP2A; this interaction stabilizes CIP2A. Highly expressed in testis, heart and spleen. Also found in brain and skeletal muscle.

It is found in the nucleus. The protein localises to the chromosome. It localises to the centromere. In terms of biological role, the B regulatory subunit might modulate substrate selectivity and catalytic activity, and might also direct the localization of the catalytic enzyme to a particular subcellular compartment. The PP2A-PPP2R5C holoenzyme may activate TP53 and play a role in DNA damage-induced inhibition of cell proliferation. PP2A-PPP2R5C may also regulate the ERK signaling pathway through ERK dephosphorylation. The polypeptide is Serine/threonine-protein phosphatase 2A 56 kDa regulatory subunit gamma isoform (PPP2R5C) (Oryctolagus cuniculus (Rabbit)).